The primary structure comprises 241 residues: Uridylate kinase (241 aa).

ATP is bound by residues 15–18 (KLSG), glycine 58, and arginine 62. UMP is bound by residues aspartate 77 and 138 to 145 (TGNPYFTT). Threonine 165, tyrosine 171, and aspartate 174 together coordinate ATP.

It belongs to the UMP kinase family. In terms of assembly, homohexamer.

Its subcellular location is the cytoplasm. It catalyses the reaction UMP + ATP = UDP + ADP. It participates in pyrimidine metabolism; CTP biosynthesis via de novo pathway; UDP from UMP (UMPK route): step 1/1. With respect to regulation, inhibited by UTP. Its function is as follows. Catalyzes the reversible phosphorylation of UMP to UDP. The chain is Uridylate kinase from Desulfotalea psychrophila (strain LSv54 / DSM 12343).